A 352-amino-acid polypeptide reads, in one-letter code: Uroporphyrinogen decarboxylase (352 aa).

Residues 27-31 (RQAGR), Asp-77, Tyr-154, Thr-209, and His-325 contribute to the substrate site.

Belongs to the uroporphyrinogen decarboxylase family. In terms of assembly, homodimer.

It localises to the cytoplasm. It carries out the reaction uroporphyrinogen III + 4 H(+) = coproporphyrinogen III + 4 CO2. The protein operates within porphyrin-containing compound metabolism; protoporphyrin-IX biosynthesis; coproporphyrinogen-III from 5-aminolevulinate: step 4/4. Functionally, catalyzes the decarboxylation of four acetate groups of uroporphyrinogen-III to yield coproporphyrinogen-III. The chain is Uroporphyrinogen decarboxylase from Legionella pneumophila subsp. pneumophila (strain Philadelphia 1 / ATCC 33152 / DSM 7513).